Consider the following 508-residue polypeptide: Amphoterin-induced protein 3 (508 aa).

The first 19 residues, 1-19 (MAWLVLSGILLCMLGAGLG), serve as a signal peptide directing secretion. At 20–383 (TSDLEDVLPP…ARPEPETFNT (364 aa)) the chain is on the extracellular side. In terms of domain architecture, LRRNT spans 25-61 (DVLPPAPHNCPDICICAADVLSCAGRGLQDLPVALPT). Disulfide bonds link Cys34/Cys40 and Cys38/Cys47. LRR repeat units follow at residues 62–83 (TAAELDLSHNALKRLHPGWLAP), 86–107 (RLRALHLGYNKLEVLGHGAFTN), 110–133 (GLRTLDLSSNMLRMLHTHDLDGLE), 134–155 (ELEKLLLFNNSLMHLDLDAFQG), 158–178 (MLSHLYLSCNELSSFSFNHLH), and 184–207 (RLRTLDLSSNWLKHISIPELAALP). The N-linked (GlcNAc...) asparagine glycan is linked to Asn107. A glycan (N-linked (GlcNAc...) asparagine) is linked at Asn142. In terms of domain architecture, LRRCT spans 219–275 (NPLPCDCSLYHLLRRWHQRGLSALHDFEREYTCLVFKVSESRVRFFEHSRVFKNCSV). Cystine bridges form between Cys223–Cys251, Cys225–Cys273, and Cys300–Cys352. N-linked (GlcNAc...) asparagine glycans are attached at residues Asn272, Asn301, Asn362, and Asn368. One can recognise an Ig-like C2-type domain in the interval 279–370 (PGLELPEEQL…HNQTLEYNVS (92 aa)). The chain crosses the membrane as a helical span at residues 384-404 (GFTTLLGCIVGLVLVLLYLFA). Topologically, residues 405 to 508 (PPCRGCCHCC…STGSEGLVMS (104 aa)) are cytoplasmic.

This sequence belongs to the immunoglobulin superfamily. AMIGO family. In terms of assembly, binds AMIGO1 or AMIGO2. As to expression, ubiquitous.

Its subcellular location is the membrane. Functionally, may mediate heterophilic cell-cell interaction. May contribute to signal transduction through its intracellular domain. The sequence is that of Amphoterin-induced protein 3 from Mus musculus (Mouse).